The sequence spans 180 residues: ATP synthase subunit delta (180 aa).

This sequence belongs to the ATPase delta chain family. As to quaternary structure, F-type ATPases have 2 components, F(1) - the catalytic core - and F(0) - the membrane proton channel. F(1) has five subunits: alpha(3), beta(3), gamma(1), delta(1), epsilon(1). F(0) has three main subunits: a(1), b(2) and c(10-14). The alpha and beta chains form an alternating ring which encloses part of the gamma chain. F(1) is attached to F(0) by a central stalk formed by the gamma and epsilon chains, while a peripheral stalk is formed by the delta and b chains.

The protein resides in the cell membrane. Functionally, f(1)F(0) ATP synthase produces ATP from ADP in the presence of a proton or sodium gradient. F-type ATPases consist of two structural domains, F(1) containing the extramembraneous catalytic core and F(0) containing the membrane proton channel, linked together by a central stalk and a peripheral stalk. During catalysis, ATP synthesis in the catalytic domain of F(1) is coupled via a rotary mechanism of the central stalk subunits to proton translocation. This protein is part of the stalk that links CF(0) to CF(1). It either transmits conformational changes from CF(0) to CF(1) or is implicated in proton conduction. This chain is ATP synthase subunit delta, found in Pediococcus pentosaceus (strain ATCC 25745 / CCUG 21536 / LMG 10740 / 183-1w).